A 3033-amino-acid chain; its full sequence is Genome polyprotein (3033 aa).

At Ser2 the chain carries N-acetylserine; by host. An interaction with STAT1 region spans residues 2–23; the sequence is STNPKPQRKTKRNTNRRPQDVK. The tract at residues 2 to 58 is interaction with EIF2AK2/PKR; that stretch reads STNPKPQRKTKRNTNRRPQDVKFPGGGQIVGGVYLLPRRGPRLGVRATRKTSERSQP. The segment at 2–59 is interaction with DDX3X; that stretch reads STNPKPQRKTKRNTNRRPQDVKFPGGGQIVGGVYLLPRRGPRLGVRATRKTSERSQPR. The disordered stretch occupies residues 2–75; sequence STNPKPQRKT…PKDRRSAGKS (74 aa). Over 2–168 the chain is Cytoplasmic; that stretch reads STNPKPQRKT…EDGINYATGN (167 aa). Short sequence motifs (nuclear localization signal) lie at residues 5 to 13 and 38 to 43; these read PKPQRKTKR and PRRGPR. The segment covering 7–16 has biased composition (basic residues); it reads PQRKTKRNTN. A compositionally biased stretch (low complexity) spans 32–47; sequence GGVYLLPRRGPRLGVR. The residue at position 53 (Ser53) is a Phosphoserine; by host. Short sequence motifs (nuclear localization signal) lie at residues 58–64 and 66–71; these read PRGRRQP and PKDRRS. Phosphoserine; by host is present on residues Ser99 and Ser116. The segment at 112–152 is important for endoplasmic reticulum and mitochondrial localization; it reads PRHRSRNLGKVIDTLTCGFADLMGYIPVVGAPVGGVARALA. Positions 122–173 are interaction with APOA2; the sequence is VIDTLTCGFADLMGYIPVVGAPVGGVARALAHGVRVLEDGINYATGNLPGCS. Positions 164 to 167 are important for lipid droplets localization; that stretch reads YATG. The helical transmembrane segment at 169-189 threads the bilayer; it reads LPGCSFSIFLLALLSCMSVPV. The propeptide at 178–191 is ER anchor for the core protein, removed in mature form by host signal peptidase; sequence LLALLSCMSVPVSA. The Lumenal portion of the chain corresponds to 190 to 358; that stretch reads SAVEVKNTSQ…TGAHWGVMFG (169 aa). N-linked (GlcNAc...) asparagine; by host glycosylation is found at Asn196, Asn209, and Asn234. An important for fusion region spans residues 265–296; the sequence is IVVSATFCSALYIGDVCGAIMIAAQATIISPQ. Residue Asn305 is glycosylated (N-linked (GlcNAc...) asparagine; by host). A helical membrane pass occupies residues 359–379; the sequence is LAYFSMQGAWAKVVVILLLTA. At 380–729 the chain is on the lumenal side; it reads GVDAQTHTIS…WEWVVLLFLL (350 aa). Residues 385–412 form an HVR1 region; sequence THTISGHAARTTHGLVSLFTPGSQQNIQ. Asn417, Asn423, and Asn430 each carry an N-linked (GlcNAc...) (high mannose) asparagine; by host glycan. Intrachain disulfides connect Cys429-Cys554, Cys452-Cys459, Cys488-Cys496, and Cys505-Cys510. Residue Asn448 is glycosylated (N-linked (GlcNAc...) asparagine; by host). An HVR2 region spans residues 475-480; the sequence is EENVTN. N-linked (GlcNAc...) asparagine; by host glycosylation occurs at Asn477. The interval 482-495 is CD81-binding 1; the sequence is DNMRPYCWHYPPRP. A glycan (N-linked (GlcNAc...) asparagine; by host) is linked at Asn534. The segment at 546–553 is CD81-binding 2; it reads PPRGAWFG. Residue Asn558 is glycosylated (N-linked (GlcNAc...) asparagine; by host). Cystine bridges form between Cys566/Cys571, Cys585/Cys589, Cys601/Cys624, and Cys611/Cys648. 2 N-linked (GlcNAc...) (high mannose) asparagine; by host glycosylation sites follow: Asn627 and Asn649. A disulfide bond links Cys656 and Cys681. Residues 664-675 are PKR/eIF2-alpha phosphorylation homology domain (PePHD); the sequence is SQLSPLLHSTTE. The helical transmembrane segment at 730–750 threads the bilayer; it reads LADARVCACLWMLLLLGQAEA. Residues 751 to 761 lie on the Lumenal side of the membrane; it reads ALEKLVILHAA. The helical transmembrane segment at 762–782 threads the bilayer; it reads SAASSHGMLCFIIFFIAAWYI. Residues 783–786 are Cytoplasmic-facing; sequence KGRV. The helical transmembrane segment at 787–807 threads the bilayer; it reads TPLVTYSYLGMWSFSLLLLAL. The Lumenal portion of the chain corresponds to 808-817; the sequence is PQQAYALDTT. The helical transmembrane segment at 818–838 threads the bilayer; it reads EQGQIGLVLLVVISVFTLSPA. Residues 839–885 lie on the Cytoplasmic side of the membrane; that stretch reads YKILLCRSLWWLSYLLVRAEALIQDWVPPWQARGGRDGIIWAATIFC. The chain crosses the membrane as a helical span at residues 886-906; it reads PGVLFDITNWLLAILGPGYLL. The 128-residue stretch at 903–1030 folds into the Peptidase C18 domain; that stretch reads GYLLRSVLTS…EYTSKGWKLL (128 aa). The Lumenal portion of the chain corresponds to 907–932; sequence RSVLTSTPYFVRAQALLRICAAVRHL. The segment at 908 to 1210 is protease NS2-3; sequence SVLTSTPYFV…PIESLDVIIR (303 aa). A lipid anchor (S-palmitoyl cysteine; by host) is attached at Cys926. The chain crosses the membrane as a helical span at residues 933–953; it reads SGGKYVQMMLLTLGKWTGTYI. Positions 933–953 are interaction with host SCPS1; sequence SGGKYVQMMLLTLGKWTGTYI. The Cytoplasmic segment spans residues 954-1661; that stretch reads YDHLSPMSGW…CMQADLEIMT (708 aa). Active-site for protease NS2 activity; shared with dimeric partner residues include His956, Glu976, and Cys997. The 182-residue stretch at 1031–1212 folds into the Peptidase S29 domain; it reads APITAYAQQT…ESLDVIIRSP (182 aa). Catalysis depends on charge relay system; for serine protease NS3 activity residues His1087 and Asp1111. 2 residues coordinate Zn(2+): Cys1127 and Cys1129. Residue Ser1169 is the Charge relay system; for serine protease NS3 activity of the active site. Zn(2+) is bound by residues Cys1175 and His1179. Residues 1221-1373 form the Helicase ATP-binding domain; sequence PAVPQTYQVG…PNIEEVALGH (153 aa). 1234-1241 provides a ligand contact to ATP; the sequence is APTGSGKS. Mg(2+)-binding residues include Ser1241 and Glu1321. Positions 1320–1323 match the DECH box motif; it reads DECH. The interval 1490–1502 is RNA-binding; sequence QRRGRTGRGRLGI. The helical transmembrane segment at 1662-1682 threads the bilayer; it reads STWVLAGGVLAAIAAYCLATG. The tract at residues 1683 to 1694 is NS3-binding; sequence CVVCIGRVNINQ. Over 1683 to 1809 the chain is Cytoplasmic; that stretch reads CVVCIGRVNI…ALTSPLPTST (127 aa). The chain crosses the membrane as a helical span at residues 1810–1830; sequence TILLNIMGGWLASQIAPAAGA. Topologically, residues 1831 to 1832 are lumenal; the sequence is TG. Residues 1833-1853 traverse the membrane as a helical segment; sequence FVVSGLVGAAVGSIGLGKILV. A topological domain (cytoplasmic) is located at residue Asp1854. Residues 1855–1875 form a helical membrane-spanning segment; it reads VLAGYGAGISGALVAFKIMSG. The Lumenal segment spans residues 1876 to 1885; the sequence is EKPSVEDVVN. A helical transmembrane segment spans residues 1886–1906; sequence LLPGILSPGALVVGVICAAIL. At 1907–1976 the chain is on the cytoplasmic side; it reads RRHVGQGEGA…WITEDCPVPC (70 aa). Residue Cys1976 is the site of S-palmitoyl cysteine; by host attachment. The stretch at 1977–2007 is an intramembrane region; sequence AGSWLRDIWDWACTILTDFKNWLSTKLLPKM. Residues 2008 to 3012 are Cytoplasmic-facing; that stretch reads PGLPFISCQR…YHSVSRARPR (1005 aa). Zn(2+)-binding residues include Cys2015, Cys2033, Cys2035, and Cys2056. The FKBP8-binding stretch occupies residues 2124-2212; that stretch reads EFFSWVDGVQ…ASSSASQLSA (89 aa). The interval 2124-2332 is transcriptional activation; sequence EFFSWVDGVQ…PTPPPRRRRA (209 aa). Residues 2139–2143 form an interaction with non-structural protein 4A region; that stretch reads PTPKP. The tract at residues 2193–2212 is disordered; that stretch reads RLARGSPPSEASSSASQLSA. Residues 2193 to 2460 are interaction with host SKP2; sequence RLARGSPPSE…ALITPCGPEE (268 aa). A phosphoserine; by host mark is found at Ser2198, Ser2201, Ser2205, Ser2208, Ser2211, and Ser2214. Residues 2198 to 2212 show a composition bias toward low complexity; it reads SPPSEASSSASQLSA. The ISDR stretch occupies residues 2214–2249; the sequence is SLRATCTAHAKNYAVEMVDANFFMGSDVTRIESETK. Positions 2214–2275 are interaction with EIF2AK2/PKR; sequence SLRATCTAHA…REPSVPSEYL (62 aa). The segment at 2249-2306 is NS4B-binding; the sequence is KVLILDSLDPSVEEEDEREPSVPSEYLLPKKKFPQALPVWARPDYNPPVVETWKRPDY. The V3 stretch occupies residues 2299 to 2376; sequence ETWKRPDYDP…MDTTDATDQP (78 aa). The segment at 2308-2328 is disordered; the sequence is PPTVSGCALPPRVTAPTPPPR. Residues 2322–2325 carry the SH3-binding motif; the sequence is APTP. The short motif at 2327–2335 is the Nuclear localization signal element; the sequence is PRRRRALVL. Residue Lys2350 forms a Glycyl lysine isopeptide (Lys-Gly) (interchain with G-Cter in ubiquitin) linkage. The disordered stretch occupies residues 2353 to 2431; the sequence is GQLPPSCDSG…PDLDSGSWST (79 aa). The segment covering 2361-2373 has biased composition (polar residues); the sequence is SGRSTGMDTTDAT. Phosphoserine; by host is present on residues Ser2471 and Ser2484. The RdRp catalytic domain maps to 2656 to 2774; the sequence is PMGFSYDTRC…ISESQGAEED (119 aa). 3 residues coordinate Mg(2+): Asp2662, Asp2760, and Asp2761. A helical transmembrane segment spans residues 3013-3033; it reads FLLLCLLLLSVGVGIFLLPAR.

It belongs to the hepacivirus polyprotein family. In terms of assembly, homooligomer. Interacts with E1 (via C-terminus). Interacts with the non-structural protein 5A. Interacts (via N-terminus) with host STAT1 (via SH2 domain); this interaction results in decreased STAT1 phosphorylation and ubiquitin-mediated proteasome-dependent STAT1 degradation, leading to decreased IFN-stimulated gene transcription. Interacts with host STAT3; this interaction constitutively activates STAT3. Interacts with host LTBR receptor. Interacts with host TNFRSF1A receptor and possibly induces apoptosis. Interacts with host HNRPK. Interacts with host YWHAE. Interacts with host UBE3A/E6AP. Interacts with host DDX3X. Interacts with host APOA2. Interacts with host RXRA protein. Interacts with host SP110 isoform 3/Sp110b; this interaction sequesters the transcriptional corepressor SP110 away from the nucleus. Interacts with host CREB3 nuclear transcription protein; this interaction triggers cell transformation. Interacts with host ACY3. Interacts with host C1QR1. Interacts with host RBM24; this interaction, which enhances the interaction of the mature core protein with 5'-UTR, may inhibit viral translation and favor replication. Interacts with host EIF2AK2/PKR; this interaction induces the autophosphorylation of EIF2AK2. Part of the viral assembly initiation complex composed of NS2, E1, E2, NS3, NS4A, NS5A and the mature core protein. Forms a heterodimer with envelope glycoprotein E2. Interacts with mature core protein. Interacts with protease NS2. The heterodimer E1/E2 interacts with host CLDN1; this interaction plays a role in viral entry into host cell. Interacts with host SPSB2 (via C-terminus). Part of the viral assembly initiation complex composed of NS2, E1, E2, NS3, NS4A, NS5A and the mature core protein. Interacts with host NEURL3; this interaction prevents E1 binding to glycoprotein E2. As to quaternary structure, forms a heterodimer with envelope glycoprotein E1. Interacts with host CD81 and SCARB1 receptors; these interactions play a role in viral entry into host cell. Interacts with host EIF2AK2/PKR; this interaction inhibits EIF2AK2 and probably allows the virus to evade the innate immune response. Interacts with host CD209/DC-SIGN and CLEC4M/DC-SIGNR. Interact with host SPCS1; this interaction is essential for viral particle assembly. Interacts with protease NS2. The heterodimer E1/E2 interacts with host CLDN1; this interaction plays a role in viral entry into host cell. Part of the viral assembly initiation complex composed of NS2, E1, E2, NS3, NS4A, NS5A and the mature core protein. Interacts with host SLC3A2/4F2hc; the interaction may facilitate viral entry into host cell. Interacts with human PLSCR1. In terms of assembly, homohexamer. Homoheptamer. Interacts with protease NS2. Homodimer. Interacts with host SPCS1; this interaction is essential for viral particle assembly. Interacts with envelope glycoprotein E1. Interacts with envelope glycoprotein E2. Interacts with viroporin p7. Interacts with serine protease/helicase NS3. Part of the replication complex composed of NS2, NS3, NS4A, NS4B, NS5A and the RNA-directed RNA polymerase embedded in an ER-derived membranous web. Part of the viral assembly initiation complex composed of NS2, E1, E2, NS3, NS4A, NS5A and the mature core protein. As to quaternary structure, interacts with protease NS2. Interacts with non-structural protein 4A; this interaction stabilizes the folding of NS3 serine protease. NS3-NS4A interaction is essential for NS3 activation and allows membrane anchorage of the latter. NS3/NS4A complex also prevents phosphorylation of host IRF3, thus preventing the establishment of dsRNA induced antiviral state. Interacts with host MAVS; this interaction leads to the cleavage and inhibition of host MAVS. Interacts with host TICAM1; this interaction leads to the cleavage and inhibition of host TICAM1. Interacts with host TANK-binding kinase/TBK1; this interaction results in the inhibition of the association between TBK1 and IRF3, which leads to the inhibition of IRF3 activation. Interacts with host RBM24. Part of the replication complex composed of NS2, NS3, NS4A, NS4B, NS5A and the RNA-directed RNA polymerase embedded in an ER-derived membranous web. Part of the viral assembly initiation complex composed of NS2, E1, E2, NS3, NS4A, NS5A and the mature core protein. In terms of assembly, interacts with NS3 serine protease; this interaction stabilizes the folding of NS3 serine protease. NS3-NS4A interaction is essential for NS3 activation and allows membrane anchorage of the latter. Interacts with non-structural protein 5A (via N-terminus). Part of the replication complex composed of NS2, NS3, NS4A, NS4B, NS5A and the RNA-directed RNA polymerase embedded in an ER-derived membranous web. Part of the viral assembly initiation complex composed of NS2, E1, E2, NS3, NS4A, NS5A and the mature core protein. Homomultimer. Interacts with non-structural protein NS5A. Interacts with host PLA2G4C; this interaction likely initiates the recruitment of replication complexes to lipid droplets. Interacts with host STING; this interaction disrupts the interaction between STING and TBK1 thereby suppressing the interferon signaling. Part of the replication complex composed of NS2, NS3, NS4A, NS4B, NS5A and the RNA-directed RNA polymerase embedded in an ER-derived membranous web. As to quaternary structure, monomer. Homodimer; dimerization is required for RNA-binding. Interacts with the mature core protein. Interacts (via N-terminus) with non-structural protein 4A. Interacts with non-structural protein 4B. Interacts (via region D2) with RNA-directed RNA polymerase. Part of the viral assembly initiation complex composed of NS2, E1, E2, NS3, NS4A, NS5A and the mature core protein. Part of the replication complex composed of NS2, NS3, NS4A, NS4B, NS5A and the RNA-directed RNA polymerase embedded in an ER-derived membranous web. Interacts with host GRB2. Interacts with host BIN1. Interacts with host PIK3R1. Interacts with host SRCAP. Interacts with host FKBP8. Interacts (via C-terminus) with host VAPB (via MSP domain). Interacts with host EIF2AK2/PKR; this interaction leads to disruption of EIF2AK2 dimerization by NS5A and probably allows the virus to evade the innate immune response. Interacts (via N-terminus) with host PACSIN2 (via N-terminus); this interaction attenuates protein kinase C alpha-mediated phosphorylation of PACSIN2 by disrupting the interaction between PACSIN2 and PRKCA. Interacts (via N-terminus) with host SRC kinase (via SH2 domain). Interacts with most Src-family kinases. Interacts with host IFI27 and SKP2; promotes the ubiquitin-mediated proteasomal degradation of NS5A. Interacts with host GPS2. Interacts with host TNFRSF21; this interaction allows the modulation by the virus of JNK, p38 MAPK, STAT3, and Akt signaling pathways in a DR6-dependent manner. Interacts (via N-terminus) with host CIDEB (via N-terminus); this interaction seems to regulate the association of HCV particles with APOE. Interacts with host CHKA/Choline Kinase-alpha; CHKA bridges host PI4KA and NS5A and potentiates NS5A-stimulated PI4KA activity, which then facilitates the targeting of the ternary complex to the ER for viral replication. Interacts with host SPSB2 (via C-terminus); this interaction targets NS5A for ubiquitination and degradation. Interacts with host RAB18; this interaction may promote the association of NS5A and other replicase components with lipid droplets. Interacts (via region D2) with host PPIA/CYPA; the interaction stimulates RNA-binding ability of NS5A and is dependent on the peptidyl-prolyl cis-trans isomerase activity of PPIA/CYPA. Interacts with host TRIM14; this interaction induces the degradation of NS5A. In terms of assembly, homooligomer. Interacts with non-structural protein 5A. Interacts with host VAPB. Interacts with host PRK2/PKN2. Interacts with host HNRNPA1 and SEPT6; these interactions facilitate viral replication. Part of the replication complex composed of NS2, NS3, NS4A, NS4B, NS5A and the RNA-directed RNA polymerase. It depends on Zn(2+) as a cofactor. Mg(2+) serves as cofactor. Post-translationally, specific enzymatic cleavages in vivo yield mature proteins. The structural proteins, core, E1, E2 and p7 are produced by proteolytic processing by host signal peptidases. The core protein precursor is synthesized as a 23 kDa, which is retained in the ER membrane through the hydrophobic signal peptide. Cleavage by the signal peptidase releases the 21 kDa mature core protein. The cleavage of the core protein precursor occurs between aminoacids 176 and 188 but the exact cleavage site is not known. Some degraded forms of the core protein appear as well during the course of infection. The other proteins (p7, NS2, NS3, NS4A, NS4B, NS5A and NS5B) are cleaved by the viral proteases. Autoprocessing between NS2 and NS3 is mediated by the NS2 cysteine protease catalytic domain and regulated by the NS3 N-terminal domain. Phosphorylated by host PKC and PKA. In terms of processing, ubiquitinated; mediated by UBE3A and leading to core protein subsequent proteasomal degradation. Post-translationally, highly N-glycosylated. Palmitoylation is required for NS2/3 autoprocessing and E2 recruitment to membranes. In terms of processing, palmitoylated. This modification may play a role in its polymerization or in protein-protein interactions. Post-translationally, phosphorylated on serines in a basal form termed p56. p58 is a hyperphosphorylated form of p56. p56 and p58 coexist in the cell in roughly equivalent amounts. Hyperphosphorylation is dependent on the presence of NS4A. Host CSNK1A1/CKI-alpha or RPS6KB1 kinases may be responsible for NS5A phosphorylation. Tyrosine phosphorylation is essential for the interaction with host SRC. In terms of processing, ubiquitinated. Ubiquitination, most probably at Lys-2350, mediated by host IFI27 and SKP2 leads to proteasomal degradation, restricting viral infection. Ubiquitination by host TRIM22 leads to interruption of viral replication. Post-translationally, the N-terminus is phosphorylated by host PRK2/PKN2.

It is found in the host endoplasmic reticulum membrane. Its subcellular location is the host mitochondrion membrane. The protein resides in the virion. The protein localises to the host cytoplasm. It localises to the host nucleus. It is found in the host lipid droplet. Its subcellular location is the virion membrane. The protein resides in the host mitochondrion. The protein localises to the host cell membrane. It localises to the host perinuclear region. It catalyses the reaction Hydrolysis of four peptide bonds in the viral precursor polyprotein, commonly with Asp or Glu in the P6 position, Cys or Thr in P1 and Ser or Ala in P1'.. The enzyme catalyses a ribonucleoside 5'-triphosphate + H2O = a ribonucleoside 5'-diphosphate + phosphate + H(+). The catalysed reaction is ATP + H2O = ADP + phosphate + H(+). It carries out the reaction RNA(n) + a ribonucleoside 5'-triphosphate = RNA(n+1) + diphosphate. Inhibited by the antiviral drug hexamethylene amiloride. Inhibition by amantadine appears to be genotype-dependent. Also inhibited by long-alkyl-chain iminosugar derivatives. Its activity is regulated as follows. Activity is up-regulated by PRK2/PKN2-mediated phosphorylation. Functionally, packages viral RNA to form a viral nucleocapsid, and promotes virion budding. Participates in the viral particle production as a result of its interaction with the non-structural protein 5A. Binds RNA and may function as a RNA chaperone to induce the RNA structural rearrangements taking place during virus replication. Modulates viral translation initiation by interacting with viral IRES and 40S ribosomal subunit. Affects various cell signaling pathways, host immunity and lipid metabolism. Prevents the establishment of cellular antiviral state by blocking the interferon-alpha/beta (IFN-alpha/beta) and IFN-gamma signaling pathways and by blocking the formation of phosphorylated STAT1 and promoting ubiquitin-mediated proteasome-dependent degradation of STAT1. Activates STAT3 leading to cellular transformation. Regulates the activity of cellular genes, including c-myc and c-fos. May repress the promoter of p53, and sequester CREB3 and SP110 isoform 3/Sp110b in the cytoplasm. Represses cell cycle negative regulating factor CDKN1A, thereby interrupting an important check point of normal cell cycle regulation. Targets transcription factors involved in the regulation of inflammatory responses and in the immune response: suppresses TNF-induced NF-kappa-B activation, and activates AP-1. Binds to dendritic cells (DCs) via C1QR1, resulting in down-regulation of T-lymphocytes proliferation. Alters lipid metabolism by interacting with hepatocellular proteins involved in lipid accumulation and storage. Induces up-regulation of FAS promoter activity, and thereby contributes to the increased triglyceride accumulation in hepatocytes (steatosis). Its function is as follows. Forms a heterodimer with envelope glycoprotein E2, which mediates virus attachment to the host cell, virion internalization through clathrin-dependent endocytosis and fusion with host membrane. Fusion with the host cell is most likely mediated by both E1 and E2, through conformational rearrangements of the heterodimer required for fusion rather than a classical class II fusion mechanism. E1/E2 heterodimer binds host apolipoproteins such as APOB and ApoE thereby forming a lipo-viro-particle (LVP). APOE associated to the LVP allows the initial virus attachment to cell surface receptors such as the heparan sulfate proteoglycans (HSPGs), syndecan-1 (SDC1), syndecan-1 (SDC2), the low-density lipoprotein receptor (LDLR) and scavenger receptor class B type I (SCARB1). The cholesterol transfer activity of SCARB1 allows E2 exposure and binding of E2 to SCARB1 and the tetraspanin CD81. E1/E2 heterodimer binding on CD81 activates the epithelial growth factor receptor (EGFR) signaling pathway. Diffusion of the complex E1-E2-EGFR-SCARB1-CD81 to the cell lateral membrane allows further interaction with Claudin 1 (CLDN1) and occludin (OCLN) to finally trigger HCV entry. Forms a heterodimer with envelope glycoprotein E1, which mediates virus attachment to the host cell, virion internalization through clathrin-dependent endocytosis and fusion with host membrane. Fusion with the host cell is most likely mediated by both E1 and E2, through conformational rearrangements of the heterodimer required for fusion rather than a classical class II fusion mechanism. The interaction between envelope glycoprotein E2 and host apolipoprotein E/APOE allows the proper assembly, maturation and infectivity of the viral particles. This interaction is probably promoted via the up-regulation of cellular autophagy by the virus. E1/E2 heterodimer binds host apolipoproteins such as APOB and APOE thereby forming a lipo-viro-particle (LVP). APOE associated to the LVP allows the initial virus attachment to cell surface receptors such as the heparan sulfate proteoglycans (HSPGs), syndecan-1 (SDC1), syndecan-1 (SDC2), the low-density lipoprotein receptor (LDLR) and scavenger receptor class B type I (SCARB1). The cholesterol transfer activity of SCARB1 allows E2 exposure and binding of E2 to SCARB1 and the tetraspanin CD81. E1/E2 heterodimer binding on CD81 activates the epithelial growth factor receptor (EGFR) signaling pathway. Diffusion of the complex E1-E2-EGFR-SCARB1-CD81 to the cell lateral membrane allows further interaction with Claudin 1 (CLDN1) and occludin (OCLN) to finally trigger HCV entry. Inhibits host EIF2AK2/PKR activation, preventing the establishment of an antiviral state. Viral ligand for CD209/DC-SIGN and CLEC4M/DC-SIGNR, which are respectively found on dendritic cells (DCs), and on liver sinusoidal endothelial cells and macrophage-like cells of lymph node sinuses. These interactions allow the capture of circulating HCV particles by these cells and subsequent facilitated transmission to permissive cells such as hepatocytes and lymphocyte subpopulations. The interaction between E2 and host amino acid transporter complex formed by SLC3A2 and SLC7A5/LAT1 may facilitate viral entry into host cell. In terms of biological role, ion channel protein that acts as a viroporin and plays an essential role in the assembly, envelopment and secretion of viral particles. Regulates the host cell secretory pathway, which induces the intracellular retention of viral glycoproteins and favors assembly of viral particles. Creates a pore in acidic organelles and releases Ca(2+) and H(+) in the cytoplasm of infected cells, leading to a productive viral infection. High levels of cytoplasmic Ca(2+) may trigger membrane trafficking and transport of viral ER-associated proteins to viroplasms, sites of viral genome replication. This ionic imbalance induces the assembly of the inflammasome complex, which triggers the maturation of pro-IL-1beta into IL-1beta through the action of caspase-1. Targets also host mitochondria and induces mitochondrial depolarization. In addition of its role as a viroporin, acts as a lipid raft adhesion factor. Functionally, cysteine protease required for the proteolytic auto-cleavage between the non-structural proteins NS2 and NS3. The N-terminus of NS3 is required for the function of NS2 protease (active region NS2-3). Promotes the initiation of viral particle assembly by mediating the interaction between structural and non-structural proteins. Its function is as follows. Displays three enzymatic activities: serine protease with a chymotrypsin-like fold, NTPase and RNA helicase. NS3 serine protease, in association with NS4A, is responsible for the cleavages of NS3-NS4A, NS4A-NS4B, NS4B-NS5A and NS5A-NS5B. The NS3/NS4A complex prevents phosphorylation of host IRF3, thus preventing the establishment of dsRNA induced antiviral state. The NS3/NS4A complex induces host amino acid transporter component SLC3A2, thus contributing to HCV propagation. NS3 RNA helicase binds to RNA and unwinds both dsDNA and dsRNA in the 3' to 5' direction, and likely resolves RNA complicated stable secondary structures in the template strand. Binds a single ATP and catalyzes the unzipping of a single base pair of dsRNA. Inhibits host antiviral proteins TBK1 and IRF3 thereby preventing the establishment of an antiviral state. Cleaves host MAVS/CARDIF thereby preventing the establishment of an antiviral state. Cleaves host TICAM1/TRIF, thereby disrupting TLR3 signaling and preventing the establishment of an antiviral state. Peptide cofactor which forms a non-covalent complex with the N-terminal of NS3 serine protease. The NS3/NS4A complex prevents phosphorylation of host IRF3, thus preventing the establishment of dsRNA induced antiviral state. The NS3/NS4A complex induces host amino acid transporter component SLC3A2, thus contributing to HCV propagation. In terms of biological role, induces a specific membrane alteration that serves as a scaffold for the virus replication complex. This membrane alteration gives rise to the so-called ER-derived membranous web that contains the replication complex. NS4B self-interaction contributes to its function in membranous web formation. Promotes host TRIF protein degradation in a CASP8-dependent manner thereby inhibiting host TLR3-mediated interferon signaling. Disrupts the interaction between STING and TBK1 contributing to the inhibition of interferon signaling. Functionally, phosphorylated protein that is indispensable for viral replication and assembly. Both hypo- and hyperphosphorylated states are required for the viral life cycle. The hyperphosphorylated form of NS5A is an inhibitor of viral replication. Involved in RNA-binding and especially in binding to the viral genome. Zinc is essential for RNA-binding. Participates in the viral particle production as a result of its interaction with the mature viral core protein. Its interaction with host VAPB may target the viral replication complex to vesicles. Down-regulates viral IRES translation initiation. Mediates interferon resistance, presumably by interacting with and inhibiting host EIF2AK2/PKR. Prevents BIN1-induced apoptosis. Acts as a transcriptional activator of some host genes important for viral replication when localized in the nucleus. Via the interaction with host PACSIN2, modulates lipid droplet formation in order to promote virion assembly. Modulates TNFRSF21/DR6 signaling pathway for viral propagation. Its function is as follows. RNA-dependent RNA polymerase that performs primer-template recognition and RNA synthesis during viral replication. Initiates RNA transcription/replication at a flavin adenine dinucleotide (FAD), resulting in a 5'- FAD cap on viral RNAs. In this way, recognition of viral 5' RNA by host pattern recognition receptors can be bypassed, thereby evading activation of antiviral pathways. In Hepatitis C virus genotype 2k (isolate VAT96) (HCV), this protein is Genome polyprotein.